We begin with the raw amino-acid sequence, 280 residues long: Polyamine aminopropyltransferase 2 (280 aa).

The PABS domain occupies 2-237 (ELWLDEALEL…GIIGFTYCSK (236 aa)). Glutamine 33 serves as a coordination point for S-methyl-5'-thioadenosine. Histidine 64 and aspartate 88 together coordinate spermidine. Residues glutamate 108 and 139–140 (DG) contribute to the S-methyl-5'-thioadenosine site. Aspartate 157 acts as the Proton acceptor in catalysis. A spermidine-binding site is contributed by 157–160 (DSSD). Proline 164 contributes to the S-methyl-5'-thioadenosine binding site.

The protein belongs to the spermidine/spermine synthase family. In terms of assembly, homodimer or homotetramer.

Its subcellular location is the cytoplasm. The catalysed reaction is S-adenosyl 3-(methylsulfanyl)propylamine + putrescine = S-methyl-5'-thioadenosine + spermidine + H(+). It participates in amine and polyamine biosynthesis; spermidine biosynthesis; spermidine from putrescine: step 1/1. Functionally, catalyzes the irreversible transfer of a propylamine group from the amino donor S-adenosylmethioninamine (decarboxy-AdoMet) to putrescine (1,4-diaminobutane) to yield spermidine. The polypeptide is Polyamine aminopropyltransferase 2 (Leptospira interrogans serogroup Icterohaemorrhagiae serovar Lai (strain 56601)).